We begin with the raw amino-acid sequence, 909 residues long: DNA mismatch repair protein MutS (909 aa).

The segment covering Q275–Q290 has biased composition (basic and acidic residues). The segment at Q275–F295 is disordered. G661 to S668 contributes to the ATP binding site.

It belongs to the DNA mismatch repair MutS family.

In terms of biological role, this protein is involved in the repair of mismatches in DNA. It is possible that it carries out the mismatch recognition step. This protein has a weak ATPase activity. The chain is DNA mismatch repair protein MutS from Mesorhizobium japonicum (strain LMG 29417 / CECT 9101 / MAFF 303099) (Mesorhizobium loti (strain MAFF 303099)).